The primary structure comprises 145 residues: Transcription antitermination protein NusB (145 aa).

This sequence belongs to the NusB family.

Its function is as follows. Involved in transcription antitermination. Required for transcription of ribosomal RNA (rRNA) genes. Binds specifically to the boxA antiterminator sequence of the ribosomal RNA (rrn) operons. This chain is Transcription antitermination protein NusB, found in Burkholderia ambifaria (strain MC40-6).